We begin with the raw amino-acid sequence, 585 residues long: Serine/threonine-protein kinase PknI (585 aa).

Residues 1–349 (MALASGVTFA…ASPTRRRPRR (349 aa)) lie on the Cytoplasmic side of the membrane. The Protein kinase domain maps to 12–252 (YTVVRMLGCS…SCREFADAMN (241 aa)). ATP contacts are provided by residues 18-26 (LGCSAMGEV) and Lys-41. Residues Lys-41, Asp-90, and Val-92 each contribute to the ADP site. Asp-137 acts as the Proton acceptor in catalysis. The chain crosses the membrane as a helical span at residues 350–370 (ILVGAVAVLLLAGLFAVGIVI). The Extracellular portion of the chain corresponds to 371–585 (GRKTNTTATE…PTTTAPGPGR (215 aa)). The segment at 546–585 (SGDLPPAVTVPDPATIPDTPDTTSTATLTPPTTTAPGPGR) is disordered. Residues 554 to 585 (TVPDPATIPDTPDTTSTATLTPPTTTAPGPGR) show a composition bias toward low complexity.

This sequence belongs to the protein kinase superfamily. Ser/Thr protein kinase family. It depends on Mn(2+) as a cofactor. Post-translationally, autophosphorylated at serine and threonine residues.

The protein localises to the cytoplasm. The protein resides in the cell membrane. It carries out the reaction L-seryl-[protein] + ATP = O-phospho-L-seryl-[protein] + ADP + H(+). It catalyses the reaction L-threonyl-[protein] + ATP = O-phospho-L-threonyl-[protein] + ADP + H(+). Plays an important role in slowing down the growth of mycobacteria within the infected host. In Mycobacterium bovis (strain ATCC BAA-935 / AF2122/97), this protein is Serine/threonine-protein kinase PknI (pknI).